The primary structure comprises 417 residues: MFDPESLKKLAIEIVKKSIEAVFPDRAVKETLPKLNLDRVILVAVGKAAWRMAKAAYEVLGKKIRKGVVVTKYGHSEGPIDDFEIYEAGHPVPDENTIKTTRRVLELVDQLNENDTVLFLLSGGGSSLFELPLEGVSLEEIQKLTSALLKSGASIEEINTVRKHLSQVKGGRFAERVFPAKVVALVLSDVLGDRLDVIASGPAWPDSSTSEDALKVLEKYGIETSESVKRAILQETPKHLSNVEIHLIGNVQKVCDEAKSLAKEKGFNAEIITTSLDCEAREAGRFIASIMKEVKFKDRPLKKPAALIFGGETVVHVKGNGIGGRNQELALSAAIALEGIEGVILCSAGTDGTDGPTDAAGGIVDGSTAKTLKAMGEDPYQYLKNNDSYNALKKSGALLITGPTGTNVNDLIIGLIV.

The protein belongs to the glycerate kinase type-1 family. In terms of assembly, homodimer. Requires Mg(2+) as cofactor.

The enzyme catalyses (R)-glycerate + ATP = (2R)-2-phosphoglycerate + ADP + H(+). Its function is as follows. Involved in the degradation of serine via 3-hydroxypyruvate. Catalyzes the ATP-dependent phosphorylation of D-glycerate to 2-phosphoglycerate. This is D-glycerate 2-kinase from Thermotoga maritima (strain ATCC 43589 / DSM 3109 / JCM 10099 / NBRC 100826 / MSB8).